We begin with the raw amino-acid sequence, 345 residues long: Biotin synthase (345 aa).

Residues 38-256 (RQVQVSTLLS…IAVARIMMPA (219 aa)) form the Radical SAM core domain. The [4Fe-4S] cluster site is built by cysteine 53, cysteine 57, and cysteine 60. Positions 97, 128, 188, and 260 each coordinate [2Fe-2S] cluster.

Belongs to the radical SAM superfamily. Biotin synthase family. Homodimer. It depends on [4Fe-4S] cluster as a cofactor. [2Fe-2S] cluster serves as cofactor.

It carries out the reaction (4R,5S)-dethiobiotin + (sulfur carrier)-SH + 2 reduced [2Fe-2S]-[ferredoxin] + 2 S-adenosyl-L-methionine = (sulfur carrier)-H + biotin + 2 5'-deoxyadenosine + 2 L-methionine + 2 oxidized [2Fe-2S]-[ferredoxin]. Its pathway is cofactor biosynthesis; biotin biosynthesis; biotin from 7,8-diaminononanoate: step 2/2. Functionally, catalyzes the conversion of dethiobiotin (DTB) to biotin by the insertion of a sulfur atom into dethiobiotin via a radical-based mechanism. The sequence is that of Biotin synthase from Pectobacterium atrosepticum (strain SCRI 1043 / ATCC BAA-672) (Erwinia carotovora subsp. atroseptica).